The chain runs to 460 residues: MTGNEKNFNHSKTKKVLVLGLAKSGFSAAKLLHELGALVTVNDGKPFDEKPEAQELLSLGVKVIAGSHPIELLDEEFSLMVKNPGIPYSHPFVQKAQELGIPVITEVELAYEVAECPIIGITGTNGKTTTTTMTGLLLNAGDLPGTARLAGNIGYPASSVAQEATADDKIVMELSSFQLMGITDFRPHVAVVTNIYEAHIDYHKTRKEYVKAKWHLQQNMTEKDYLILNWNQEELRELSKKTKATVLPFATEQKLPKGACSLDGSIYYNQEKIMDITELGVPGSHNVENALAAISVAKLYGISNEAIKNALHHFHGVPHRTQYVGEFQGRKFYNDSKATNILATKMALSGFQLDQLVLIAGGLDRGNSFDELIPALKGIKALITFGETQNRLEDAGKKAGIPVIKTAENAEAAVPIALELSEEGDSILLSPANASWDQYPNFEIRGERFMEAVNKLTIQK.

Residue 123-129 (GTNGKTT) participates in ATP binding.

Belongs to the MurCDEF family.

The protein resides in the cytoplasm. The enzyme catalyses UDP-N-acetyl-alpha-D-muramoyl-L-alanine + D-glutamate + ATP = UDP-N-acetyl-alpha-D-muramoyl-L-alanyl-D-glutamate + ADP + phosphate + H(+). The protein operates within cell wall biogenesis; peptidoglycan biosynthesis. In terms of biological role, cell wall formation. Catalyzes the addition of glutamate to the nucleotide precursor UDP-N-acetylmuramoyl-L-alanine (UMA). The polypeptide is UDP-N-acetylmuramoylalanine--D-glutamate ligase (murD) (Enterococcus hirae).